The following is a 250-amino-acid chain: Copper homeostasis protein cutC homolog (250 aa).

The protein belongs to the CutC family.

Its function is as follows. Involved in copper homeostasis. Affects body morphology and length, egg laying and brood size. The sequence is that of Copper homeostasis protein cutC homolog (cutc-1) from Caenorhabditis elegans.